Reading from the N-terminus, the 329-residue chain is Ribonucleoside-diphosphate reductase subunit beta (329 aa).

Fe cation is bound by residues aspartate 66, glutamate 97, and histidine 101. Residue tyrosine 105 is part of the active site. The Fe cation site is built by glutamate 164, glutamate 198, and histidine 201.

Belongs to the ribonucleoside diphosphate reductase small chain family. As to quaternary structure, tetramer of two alpha and two beta subunits. It depends on Fe cation as a cofactor.

It catalyses the reaction a 2'-deoxyribonucleoside 5'-diphosphate + [thioredoxin]-disulfide + H2O = a ribonucleoside 5'-diphosphate + [thioredoxin]-dithiol. In terms of biological role, provides the precursors necessary for DNA synthesis. Catalyzes the biosynthesis of deoxyribonucleotides from the corresponding ribonucleotides. This is Ribonucleoside-diphosphate reductase subunit beta (bnrdF) from Bacillus pumilus (Bacillus mesentericus).